A 455-amino-acid chain; its full sequence is Glutamyl-tRNA reductase (455 aa).

Substrate-binding positions include 49–52 (TCNR), serine 109, 114–116 (EAQ), and glutamine 120. The Nucleophile role is filled by cysteine 50. 190 to 195 (GAGAMG) provides a ligand contact to NADP(+).

The protein belongs to the glutamyl-tRNA reductase family. As to quaternary structure, homodimer.

It catalyses the reaction (S)-4-amino-5-oxopentanoate + tRNA(Glu) + NADP(+) = L-glutamyl-tRNA(Glu) + NADPH + H(+). It functions in the pathway porphyrin-containing compound metabolism; protoporphyrin-IX biosynthesis; 5-aminolevulinate from L-glutamyl-tRNA(Glu): step 1/2. Its function is as follows. Catalyzes the NADPH-dependent reduction of glutamyl-tRNA(Glu) to glutamate 1-semialdehyde (GSA). The chain is Glutamyl-tRNA reductase from Salinispora tropica (strain ATCC BAA-916 / DSM 44818 / JCM 13857 / NBRC 105044 / CNB-440).